The following is a 331-amino-acid chain: Holliday junction branch migration complex subunit RuvB (331 aa).

The interval 1-186 (MAKTMMQDRL…FGIVQRLEFY (186 aa)) is large ATPase domain (RuvB-L). ATP-binding positions include Ile25, Arg26, Gly67, Lys70, Thr71, Thr72, 133–135 (EDF), Arg176, Tyr186, and Arg223. Thr71 is a Mg(2+) binding site. Residues 187-257 (NIADLTTIVS…IAGSALDMLA (71 aa)) are small ATPAse domain (RuvB-S). The tract at residues 260–331 (RRGLDHLDRR…LTQMAIDQMV (72 aa)) is head domain (RuvB-H). Arg296, Arg315, and Arg320 together coordinate DNA.

This sequence belongs to the RuvB family. In terms of assembly, homohexamer. Forms an RuvA(8)-RuvB(12)-Holliday junction (HJ) complex. HJ DNA is sandwiched between 2 RuvA tetramers; dsDNA enters through RuvA and exits via RuvB. An RuvB hexamer assembles on each DNA strand where it exits the tetramer. Each RuvB hexamer is contacted by two RuvA subunits (via domain III) on 2 adjacent RuvB subunits; this complex drives branch migration. In the full resolvosome a probable DNA-RuvA(4)-RuvB(12)-RuvC(2) complex forms which resolves the HJ.

The protein resides in the cytoplasm. The enzyme catalyses ATP + H2O = ADP + phosphate + H(+). The RuvA-RuvB-RuvC complex processes Holliday junction (HJ) DNA during genetic recombination and DNA repair, while the RuvA-RuvB complex plays an important role in the rescue of blocked DNA replication forks via replication fork reversal (RFR). RuvA specifically binds to HJ cruciform DNA, conferring on it an open structure. The RuvB hexamer acts as an ATP-dependent pump, pulling dsDNA into and through the RuvAB complex. RuvB forms 2 homohexamers on either side of HJ DNA bound by 1 or 2 RuvA tetramers; 4 subunits per hexamer contact DNA at a time. Coordinated motions by a converter formed by DNA-disengaged RuvB subunits stimulates ATP hydrolysis and nucleotide exchange. Immobilization of the converter enables RuvB to convert the ATP-contained energy into a lever motion, pulling 2 nucleotides of DNA out of the RuvA tetramer per ATP hydrolyzed, thus driving DNA branch migration. The RuvB motors rotate together with the DNA substrate, which together with the progressing nucleotide cycle form the mechanistic basis for DNA recombination by continuous HJ branch migration. Branch migration allows RuvC to scan DNA until it finds its consensus sequence, where it cleaves and resolves cruciform DNA. The protein is Holliday junction branch migration complex subunit RuvB of Psychrobacter arcticus (strain DSM 17307 / VKM B-2377 / 273-4).